The following is a 673-amino-acid chain: Citrate exporter 1 (673 aa).

The disordered stretch occupies residues 1–44 (MFNLNTKSSKEPEVTEVAVDSTPSSPVTRESSPESSPDNSAVDL). The span at 21 to 39 (STPSSPVTRESSPESSPDN) shows a compositional bias: polar residues. The helical transmembrane segment at 67–87 (FLVFGAMAFCMLVSFMDQNGI) threads the bilayer. The N-linked (GlcNAc...) asparagine glycan is linked to Asn-99. Helical transmembrane passes span 103 to 123 (TISW…VLYG), 133 to 153 (LVFM…ACAQ), 164 to 184 (FSGI…SDIV), and 194 to 214 (GILG…GAAF). Asn-217 carries an N-linked (GlcNAc...) asparagine glycan. 8 helical membrane passes run 222-242 (AIFY…FFIL), 261-281 (PGLF…AGGG), 292-312 (ISML…EGFF), 322-342 (IFGT…GIAY), 364-384 (AAGM…ISGQ), 393-413 (LEVI…KCFW), 419-439 (MALL…CFQP), and 465-485 (SFGG…SLKA). Asn-526 carries an N-linked (GlcNAc...) asparagine glycan. The helical transmembrane segment at 529 to 549 (HTVFVFLCPIVGACLLVTVFV) threads the bilayer. Residues 564-596 (AKTVEDKDKDESGTDCEDMTKGEVLVSEKEGKL) are compositionally biased toward basic and acidic residues. Disordered stretches follow at residues 564-608 (AKTV…MHFG) and 636-673 (FPPM…IQEE). N-linked (GlcNAc...) asparagine glycosylation is found at Asn-599 and Asn-662.

It belongs to the major facilitator superfamily.

It is found in the cell membrane. It catalyses the reaction citrate(in) = citrate(out). Functionally, transmembrane transporter that exports citrate across the cell membrane. The chain is Citrate exporter 1 from Yarrowia lipolytica (strain CLIB 122 / E 150) (Yeast).